The chain runs to 534 residues: Cytochrome P450 78A9 (534 aa).

Residues 26-46 (LALSLLVASLASLALSLFFWS) form a helical membrane-spanning segment. Residue Cys474 coordinates heme.

It belongs to the cytochrome P450 family. Heme is required as a cofactor. Expressed in the funiculus of developing ovules.

The protein localises to the membrane. Its function is as follows. Plays a role in seed and fruit development. Functions probably in association with CYP78A6 in the regulation of seed growth. In Arabidopsis thaliana (Mouse-ear cress), this protein is Cytochrome P450 78A9 (CYP78A9).